A 192-amino-acid polypeptide reads, in one-letter code: Interleukin-18 (192 aa).

Positions 1–35 (MAAMSEDSCVNFKEMMFIDNTLYFIPEENGDLESD) are excised as a propeptide.

It belongs to the IL-1 family. In terms of assembly, forms a ternary complex with ligand-binding receptor subunit IL18R1 and signaling receptor subunit IL18RAP at the plasma membrane. Mature IL18 first binds to IL18R1 forming a low affinity binary complex, which then interacts with IL18RAP to form a high affinity ternary complex that signals inside the cell. Interacts with cargo receptor TMED10; the interaction mediates the translocation from the cytoplasm into the ERGIC (endoplasmic reticulum-Golgi intermediate compartment) and thereby secretion. In terms of processing, the pro-IL-18 precursor is processed by CASP1 to yield its mature, active form. The pro-IL-18 precursor is however not processed by Casp4/Casp11 in rodents. The pro-IL-18 precursor features autoinhibitory interactions between the propeptide and the post-cleavage-site region, preventing recognition by the IL18R1 receptor. Processing by CASP1 induces conformational changes to generate critical receptor-binding sites. The mature form is then secreted and released in the extracellular milieu by passing through the gasdermin-D (GSDMD) pore. In contrast, cleavage by CASP3 inactivates IL18.

The protein localises to the cytoplasm. Its subcellular location is the secreted. Pro-inflammatory cytokine primarily involved in epithelial barrier repair, polarized T-helper 1 (Th1) cell and natural killer (NK) cell immune responses. Upon binding to IL18R1 and IL18RAP, forms a signaling ternary complex which activates NF-kappa-B, triggering synthesis of inflammatory mediators. Synergizes with IL12/interleukin-12 to induce IFNG synthesis from T-helper 1 (Th1) cells and natural killer (NK) cells. Involved in transduction of inflammation downstream of pyroptosis: its mature form is specifically released in the extracellular milieu by passing through the gasdermin-D (GSDMD) pore. The chain is Interleukin-18 from Mus musculus (Mouse).